A 344-amino-acid polypeptide reads, in one-letter code: L-lactate dehydrogenase B (344 aa).

NAD(+) contacts are provided by residues 62 to 67 and Arg-109; that span reads DALPDK. 3 residues coordinate substrate: Arg-116, Asn-148, and Arg-179. Asn-148 provides a ligand contact to NAD(+). The active-site Proton acceptor is the His-203. Thr-258 is a binding site for substrate.

This sequence belongs to the LDH/MDH superfamily. LDH family. Tetramer that arise from random association of LDH-A and LDH-B.

It carries out the reaction (S)-lactate + NAD(+) = pyruvate + NADH + H(+). It participates in fermentation; pyruvate fermentation to lactate; (S)-lactate from pyruvate: step 1/1. This chain is L-lactate dehydrogenase B, found in Hordeum vulgare (Barley).